A 214-amino-acid chain; its full sequence is ER lumen protein-retaining receptor (214 aa).

The Lumenal portion of the chain corresponds to 1–4 (MVFN). Residues 5–23 (LFRISADLVHLLSIYFLLT) form a helical membrane-spanning segment. Residues 24 to 37 (KIISHKNCIGISLR) lie on the Cytoplasmic side of the membrane. Residues 38–55 (SQILFFIVWVTRYLDIFY) form a helical membrane-spanning segment. Residues 56 to 63 (NFYSLYNT) are Lumenal-facing. Residues 64 to 82 (ILKIVYLTTSAYTIYLISK) traverse the membrane as a helical segment. The Cytoplasmic portion of the chain corresponds to 83 to 98 (RFRATYDKIHDTLNVW). Residues 99–112 (YLIVPCIVLAFIFT) traverse the membrane as a helical segment. Over 113–119 (EDYSITE) the chain is Lumenal. A helical transmembrane segment spans residues 120–139 (ICWTFSIFLEAVAILPQILL). Over 140 to 151 (LRSTGEVENLNS) the chain is Cytoplasmic. The helical transmembrane segment at 152–170 (QYIFCLGLYRALYIINWIY) threads the bilayer. The Lumenal portion of the chain corresponds to 171–181 (RYATEQSYWSP). A helical membrane pass occupies residues 182–202 (LTWICGSIQTLLYVEYFYYYI). Residues 203 to 214 (KSRVEGTKFVLP) lie on the Cytoplasmic side of the membrane.

It belongs to the ERD2 family.

It is found in the endoplasmic reticulum membrane. In terms of biological role, required for the retention of luminal endoplasmic reticulum proteins. Determines the specificity of the luminal ER protein retention system. Also required for normal vesicular traffic through the Golgi. This chain is ER lumen protein-retaining receptor, found in Entamoeba histolytica (strain ATCC 30459 / HM-1:IMSS / ABRM).